A 212-amino-acid chain; its full sequence is Pyridoxine/pyridoxamine 5'-phosphate oxidase (212 aa).

Substrate contacts are provided by residues arginine 7–tyrosine 10 and lysine 66. Residues arginine 61–lysine 66, tyrosine 76–threonine 77, arginine 82, lysine 83, and glutamine 105 each bind FMN. Residues tyrosine 123, arginine 127, and serine 131 each coordinate substrate. FMN-binding positions include glutamine 140–serine 141 and tryptophan 185. Arginine 191 to histidine 193 provides a ligand contact to substrate. Arginine 195 provides a ligand contact to FMN.

It belongs to the pyridoxamine 5'-phosphate oxidase family. Homodimer. Requires FMN as cofactor.

The enzyme catalyses pyridoxamine 5'-phosphate + O2 + H2O = pyridoxal 5'-phosphate + H2O2 + NH4(+). The catalysed reaction is pyridoxine 5'-phosphate + O2 = pyridoxal 5'-phosphate + H2O2. Its pathway is cofactor metabolism; pyridoxal 5'-phosphate salvage; pyridoxal 5'-phosphate from pyridoxamine 5'-phosphate: step 1/1. It participates in cofactor metabolism; pyridoxal 5'-phosphate salvage; pyridoxal 5'-phosphate from pyridoxine 5'-phosphate: step 1/1. Functionally, catalyzes the oxidation of either pyridoxine 5'-phosphate (PNP) or pyridoxamine 5'-phosphate (PMP) into pyridoxal 5'-phosphate (PLP). This Hahella chejuensis (strain KCTC 2396) protein is Pyridoxine/pyridoxamine 5'-phosphate oxidase.